The chain runs to 246 residues: Acetoacetate decarboxylase (246 aa).

The Schiff-base intermediate with acetoacetate role is filled by Lys116.

This sequence belongs to the ADC family.

It catalyses the reaction acetoacetate + H(+) = acetone + CO2. Catalyzes the conversion of acetoacetate to acetone and carbon dioxide. The polypeptide is Acetoacetate decarboxylase (Burkholderia multivorans (strain ATCC 17616 / 249)).